Consider the following 208-residue polypeptide: Small ribosomal subunit protein uS4B (208 aa).

Residues 95 to 160 (KRLDNVVFRL…NQVYMAAKQA (66 aa)) enclose the S4 RNA-binding domain.

The protein belongs to the universal ribosomal protein uS4 family. In terms of assembly, part of the 30S ribosomal subunit. Contacts protein S5. The interaction surface between S4 and S5 is involved in control of translational fidelity.

Functionally, one of the primary rRNA binding proteins, it binds directly to 16S rRNA where it nucleates assembly of the body of the 30S subunit. In terms of biological role, with S5 and S12 plays an important role in translational accuracy. The protein is Small ribosomal subunit protein uS4B of Bdellovibrio bacteriovorus (strain ATCC 15356 / DSM 50701 / NCIMB 9529 / HD100).